The chain runs to 388 residues: 8-amino-7-oxononanoate synthase (388 aa).

Arg-20 provides a ligand contact to substrate. 107–108 is a binding site for pyridoxal 5'-phosphate; it reads GY. His-132 serves as a coordination point for substrate. The pyridoxal 5'-phosphate site is built by Ser-178, His-206, and Thr-237. Residue Lys-240 is modified to N6-(pyridoxal phosphate)lysine. Thr-356 contacts substrate.

This sequence belongs to the class-II pyridoxal-phosphate-dependent aminotransferase family. BioF subfamily. In terms of assembly, homodimer. The cofactor is pyridoxal 5'-phosphate.

It carries out the reaction 6-carboxyhexanoyl-[ACP] + L-alanine + H(+) = (8S)-8-amino-7-oxononanoate + holo-[ACP] + CO2. It functions in the pathway cofactor biosynthesis; biotin biosynthesis. In terms of biological role, catalyzes the decarboxylative condensation of pimeloyl-[acyl-carrier protein] and L-alanine to produce 8-amino-7-oxononanoate (AON), [acyl-carrier protein], and carbon dioxide. This Herminiimonas arsenicoxydans protein is 8-amino-7-oxononanoate synthase.